Consider the following 259-residue polypeptide: Dihydroorotate dehydrogenase B (NAD(+)), electron transfer subunit (259 aa).

Residues 3–103 (KKQGRLTIVK…LGPLGQGFPL (101 aa)) enclose the FAD-binding FR-type domain. FAD-binding positions include 54 to 57 (RPIS), 71 to 73 (IYR), and 78 to 79 (GT). Residues cysteine 222, cysteine 227, cysteine 230, and cysteine 246 each contribute to the [2Fe-2S] cluster site.

This sequence belongs to the PyrK family. In terms of assembly, heterotetramer of 2 PyrK and 2 PyrD type B subunits. [2Fe-2S] cluster is required as a cofactor. FAD serves as cofactor.

The protein operates within pyrimidine metabolism; UMP biosynthesis via de novo pathway; orotate from (S)-dihydroorotate (NAD(+) route): step 1/1. Responsible for channeling the electrons from the oxidation of dihydroorotate from the FMN redox center in the PyrD type B subunit to the ultimate electron acceptor NAD(+). This Shouchella clausii (strain KSM-K16) (Alkalihalobacillus clausii) protein is Dihydroorotate dehydrogenase B (NAD(+)), electron transfer subunit.